A 432-amino-acid chain; its full sequence is MHIAVVGLSHRTAPVEIRERLSIPEQTMETSLQSLRGHEQVLEASILSTCNRLEIYTLVRHPDLGVSAVSEFLSGHSGLATGELTPHLFNYHHEDAVDHLMRVAAGLDSLVLGEGQILSQVKKMMRLGQEHKSLGPILNRLLTQAVSTGKRVRSETNLGTGAVSISSAAVELAQLKLGQSRGLDQLVTLESEQIAVVGAGRMSRLLLQHLQAKGASGVVLLNRTVQRAELLAADFPDLPVQCRPLTDLDQCLSTCSLVFTSTAADDPIIDAARLEPLNRRSKLRLIDIGVPRNIAADAAAVDGVESHDVDDLQEVVARNQEARQAMAREAEQLLQQEAQQFLEWWDSLEAVPTINRLRSSMETIRVEELQKALSRMGPDFSARERKVVEALSKGIINKILHTPVTSLRAPQGRQERQQALRTVERLFSLGDD.

Substrate is bound by residues 49–52 (TCNR), Ser-109, 114–116 (EGQ), and Gln-120. The Nucleophile role is filled by Cys-50. 198-203 (GAGRMS) is an NADP(+) binding site.

This sequence belongs to the glutamyl-tRNA reductase family. Homodimer.

It catalyses the reaction (S)-4-amino-5-oxopentanoate + tRNA(Glu) + NADP(+) = L-glutamyl-tRNA(Glu) + NADPH + H(+). Its pathway is porphyrin-containing compound metabolism; protoporphyrin-IX biosynthesis; 5-aminolevulinate from L-glutamyl-tRNA(Glu): step 1/2. It functions in the pathway porphyrin-containing compound metabolism; chlorophyll biosynthesis. In terms of biological role, catalyzes the NADPH-dependent reduction of glutamyl-tRNA(Glu) to glutamate 1-semialdehyde (GSA). The sequence is that of Glutamyl-tRNA reductase from Parasynechococcus marenigrum (strain WH8102).